A 387-amino-acid polypeptide reads, in one-letter code: 4-hydroxy-3-methylbut-2-en-1-yl diphosphate synthase (flavodoxin) (387 aa).

4 residues coordinate [4Fe-4S] cluster: Cys280, Cys283, Cys315, and Glu322.

Belongs to the IspG family. It depends on [4Fe-4S] cluster as a cofactor.

The enzyme catalyses (2E)-4-hydroxy-3-methylbut-2-enyl diphosphate + oxidized [flavodoxin] + H2O + 2 H(+) = 2-C-methyl-D-erythritol 2,4-cyclic diphosphate + reduced [flavodoxin]. Its pathway is isoprenoid biosynthesis; isopentenyl diphosphate biosynthesis via DXP pathway; isopentenyl diphosphate from 1-deoxy-D-xylulose 5-phosphate: step 5/6. Its function is as follows. Converts 2C-methyl-D-erythritol 2,4-cyclodiphosphate (ME-2,4cPP) into 1-hydroxy-2-methyl-2-(E)-butenyl 4-diphosphate. The protein is 4-hydroxy-3-methylbut-2-en-1-yl diphosphate synthase (flavodoxin) of Mycobacterium bovis (strain ATCC BAA-935 / AF2122/97).